Consider the following 72-residue polypeptide: Conotoxin 3 (72 aa).

The signal sequence occupies residues 1–22 (MKLTCVVIVAVLLLTACQLITA). A propeptide spanning residues 23-46 (DDSRGTQEHRALRSDTKLSMLTLR) is cleaved from the precursor. 3 cysteine pairs are disulfide-bonded: cysteine 47–cysteine 61, cysteine 54–cysteine 64, and cysteine 60–cysteine 71.

Belongs to the conotoxin O1 superfamily. Expressed by the venom duct.

It localises to the secreted. This chain is Conotoxin 3, found in Conus striatus (Striated cone).